A 447-amino-acid polypeptide reads, in one-letter code: MTIYHFVGIKGSGMSALAQILHDKGFQVQGSDVDKYFFTQKALEEKQIPIMTFSADNIQEGLTIIAGNAFPDTHEEIERALELGLPVIRYHKFLGQLIDGYTSIAITGSHGKTSTTGLLSHVVGAIRPTSYLIGDGTGSGTKGAEYFALEACEYQRHFLAYKPTYAIMTNIDWDHPDYFKSVDDVFNAFETLGKQVKKAVFALGDDAELRKLTLDIPIIYFGFGEENEFQAKNVIKETTGTKFDVYHRGEFLGSFEIPAYGDHNVLNALSVIALCDYEGLPVEDVKKELKTFEGVKRRFSITEKANQVLVDDYAHHPSEIRATVNAARQKYPDKKVVAVFQPHTFTRTRTFLQGFADSLNLADEVYLCDIFGSAREKTGNLTIADLAHKTKGNHIIKEEHTEELLKYPEAVILFMGAGDVQKFQAAYEKVLDHEVLTEADLKKSAIN.

An ATP-binding site is contributed by Gly-108–Ser-114.

Belongs to the MurCDEF family.

The protein localises to the cytoplasm. It carries out the reaction UDP-N-acetyl-alpha-D-muramate + L-alanine + ATP = UDP-N-acetyl-alpha-D-muramoyl-L-alanine + ADP + phosphate + H(+). The protein operates within cell wall biogenesis; peptidoglycan biosynthesis. Cell wall formation. This chain is UDP-N-acetylmuramate--L-alanine ligase, found in Listeria monocytogenes serotype 4b (strain F2365).